The primary structure comprises 523 residues: GMP synthase [glutamine-hydrolyzing] (523 aa).

Residues 18-208 (KILIVDFGGQ…LYNVCGAKGD (191 aa)) enclose the Glutamine amidotransferase type-1 domain. The active-site Nucleophile is the cysteine 95. Active-site residues include histidine 182 and glutamate 184. Residues 209-398 (WNMKSFLAEA…LGLPDYLVHR (190 aa)) enclose the GMPS ATP-PPase domain. An ATP-binding site is contributed by 236–242 (SGGVDSS).

In terms of assembly, homodimer.

The catalysed reaction is XMP + L-glutamine + ATP + H2O = GMP + L-glutamate + AMP + diphosphate + 2 H(+). The protein operates within purine metabolism; GMP biosynthesis; GMP from XMP (L-Gln route): step 1/1. Functionally, catalyzes the synthesis of GMP from XMP. This chain is GMP synthase [glutamine-hydrolyzing], found in Treponema denticola (strain ATCC 35405 / DSM 14222 / CIP 103919 / JCM 8153 / KCTC 15104).